A 4299-amino-acid polypeptide reads, in one-letter code: DNA-dependent protein kinase catalytic subunit (4299 aa).

A coiled-coil region spans residues 551-590; that stretch reads KDLNSTIKKENNNNNNNKNKNNNNNQTLTKEEISKSIKKL. Disordered stretches follow at residues 557–577, 613–633, 878–917, and 1206–1230; these read IKKE…NNQT, DEND…DQDN, NSSD…MKFK, and SSSK…EDGT. Composition is skewed to low complexity over residues 562 to 575, 617 to 631, 878 to 893, and 1206 to 1226; these read NNNN…NNNN, NNSN…NNDQ, NSSD…IDSG, and SSSK…NNNS. Phosphoserine; by autocatalysis is present on Ser-2789. Phosphothreonine; by autocatalysis occurs at positions 2814 and 2822. The span at 2832-2867 shows a compositional bias: low complexity; it reads SSSQSYGGTNNNTGSSQLSSSSSSSGSQSSSQNNSS. Disordered regions lie at residues 2832-2881 and 3535-3559; these read SSSQ…PKLI and TTSS…SSSQ. Residues 3031-3707 enclose the FAT domain; the sequence is KIKDISLNSN…YFPFKISSEQ (677 aa). One can recognise a PI3K/PI4K catalytic domain in the interval 3887–4226; the sequence is FDTNVLVMGS…AKKKLELVNP (340 aa). Positions 3893–3899 are G-loop; the sequence is VMGSLRK. The interval 4092 to 4100 is catalytic loop; that stretch reads GIGDRHLEN. The segment at 4112–4137 is activation loop; sequence GIDFGHAFGTATQFLPIPELMPFRLT. One can recognise an FATC domain in the interval 4267-4299; that stretch reads VCSSVKEQIDCLIDQSTDPNILSRAWVGWNGAL.

The protein belongs to the PI3/PI4-kinase family. DNAPK subfamily. Post-translationally, may be phosphorylated upon DNA damage. Could be autophosphorylated. Autophosphorylation induces a conformational change that leads to remodeling of the DNA-PK complex, requisite for efficient end processing and DNA repair. Autophosphorylated on Ser-2789, Thr-2814 and Thr-2822. Ser-2789 is a DNA damage-inducible phosphorylation site (inducible with ionizing radiation, IR).

The protein localises to the nucleus. The protein resides in the nucleolus. The enzyme catalyses L-seryl-[protein] + ATP = O-phospho-L-seryl-[protein] + ADP + H(+). It catalyses the reaction L-threonyl-[protein] + ATP = O-phospho-L-threonyl-[protein] + ADP + H(+). Its activity is regulated as follows. Inhibited by wortmannin. Activity of the enzyme seems to be attenuated by autophosphorylation. Functionally, serine/threonine-protein kinase that acts as a molecular sensor for DNA damage. Is recruited to DNA ends by the Ku70/Ku80 heterodimer and is involved in DNA non-homologous end joining (NHEJ) required for double-strand break (DSB) repair and V(D)J recombination. This activity is only apparent when DNA damage is administered in G1 phase of the cell cycle. Required for efficient signaling of DNA double-stranded breaks via phosphorylation of H2AX during G1. This Dictyostelium discoideum (Social amoeba) protein is DNA-dependent protein kinase catalytic subunit (dnapkcs).